The primary structure comprises 407 residues: 45 kDa calcium-binding protein (407 aa).

The first 35 residues, 1–35 (MVWSWVAMASRWGPLVGLAPRCLWLLGAVLLMDAS), serve as a signal peptide directing secretion. Residue N40 is glycosylated (N-linked (GlcNAc...) asparagine). 2 EF-hand domains span residues 98–133 (RSRR…KTAE) and 137–172 (EAME…SKGH). At S99 the chain carries Phosphoserine. Ca(2+) contacts are provided by D111, N113, D115, K117, E122, D150, D152, D154, H156, and E161. Residues T193 and T217 each carry the phosphothreonine modification. Over residues 249–259 (GSSLAGAPGPG) the composition is skewed to low complexity. A disordered region spans residues 249-282 (GSSLAGAPGPGDQRQGPGIAGKSGKVLREPQPGC). Ca(2+) contacts are provided by D291, D293, D295, Q297, and E302. EF-hand domains lie at 291-313 (DQDG…TVEN), 323-358 (WVKD…MNEY), and 359-394 (NALN…FTGS). At T310 the chain carries Phosphothreonine. Ca(2+) is bound by residues D336, N338, and D340. A Phosphothreonine modification is found at T344. The Ca(2+) site is built by E347, D372, N374, N376, H378, and E383. The interval 354–407 (PMNEYNALNEAKQMIAVADENQNHHLEPEEVLKYSEFFTGSKLVDYARSVHEEF) is necessary for intracellular retention in Golgi apparatus lumen.

This sequence belongs to the CREC family.

The protein resides in the golgi apparatus lumen. Its function is as follows. May regulate calcium-dependent activities in the endoplasmic reticulum lumen or post-ER compartment. This Macaca fascicularis (Crab-eating macaque) protein is 45 kDa calcium-binding protein (SDF4).